The following is a 353-amino-acid chain: Protein MGF 360-13L (353 aa).

Belongs to the asfivirus MGF 360 family.

Functionally, plays a role in virus cell tropism, and may be required for efficient virus replication in macrophages. In African swine fever virus (isolate Tick/Malawi/Lil 20-1/1983) (ASFV), this protein is Protein MGF 360-13L.